Consider the following 172-residue polypeptide: Shikimate kinase (172 aa).

11–16 (GSGKTT) provides a ligand contact to ATP. Threonine 15 lines the Mg(2+) pocket. The substrate site is built by aspartate 33, arginine 57, and glycine 79. ATP is bound at residue arginine 117. Arginine 136 contributes to the substrate binding site.

The protein belongs to the shikimate kinase family. In terms of assembly, monomer. Mg(2+) is required as a cofactor.

It localises to the cytoplasm. It catalyses the reaction shikimate + ATP = 3-phosphoshikimate + ADP + H(+). The protein operates within metabolic intermediate biosynthesis; chorismate biosynthesis; chorismate from D-erythrose 4-phosphate and phosphoenolpyruvate: step 5/7. Functionally, catalyzes the specific phosphorylation of the 3-hydroxyl group of shikimic acid using ATP as a cosubstrate. This is Shikimate kinase from Caldicellulosiruptor saccharolyticus (strain ATCC 43494 / DSM 8903 / Tp8T 6331).